The chain runs to 388 residues: Yellow-related salivary protein SP03 (388 aa).

Residues 1–18 (MKIFLCLIAVVSLQGVLA) form the signal peptide. Residue Asn-29 is glycosylated (N-linked (GlcNAc...) asparagine).

This sequence belongs to the major royal jelly protein family. Female salivary gland (at protein level).

It localises to the secreted. Probably modulates blood feeding of sand flies on vertebrate species by binding and sequestering different mediators involved in the host response. Binds biogenic amines. Binds noradrenaline with medium affinity. Binds octopamine with low affinity. Poorly binds histamine, adrenaline and serotonin. The sequence is that of Yellow-related salivary protein SP03 from Phlebotomus perniciosus (Phlebotomine sand fly).